Reading from the N-terminus, the 785-residue chain is Probably inactive leucine-rich repeat receptor-like protein kinase At5g58150 (785 aa).

Residues 1–21 form the signal peptide; the sequence is MRLSLWGSLLFFSFFVKHLTS. Residues 22-436 are Extracellular-facing; that stretch reads LDPNTDAYHL…KVNKKNTGLK (415 aa). LRR repeat units follow at residues 64-88, 89-112, 114-136, 138-160, 161-184, 186-208, 210-232, 236-258, 259-283, 284-306, 307-330, 331-355, 357-377, and 379-405; these read SENV…TIGK, MSKL…LWSL, LLES…IGNF, SLHT…ISNL, VNLT…LVHC, SLLS…FGSA, PLLK…VLHE, TVDL…HKHN, WSSL…LSSA, HKLG…EIGK, LSAL…EISR, LSHL…SVKN, EVLD…LLEK, and AMMQ…TIQR. Asparagine 119 carries N-linked (GlcNAc...) asparagine glycosylation. Residues asparagine 162, asparagine 198, asparagine 216, and asparagine 258 are each glycosylated (N-linked (GlcNAc...) asparagine). N-linked (GlcNAc...) asparagine glycans are attached at residues asparagine 314, asparagine 319, and asparagine 343. Asparagine 385, asparagine 390, and asparagine 397 each carry an N-linked (GlcNAc...) asparagine glycan. The chain crosses the membrane as a helical span at residues 437-457; it reads IGLGLAISMAFLLIGLLLILV. The Cytoplasmic portion of the chain corresponds to 458–785; the sequence is ALRVRRKSRT…GLLKDISPNY (328 aa). Threonine 510 and threonine 518 each carry phosphothreonine. In terms of domain architecture, Protein kinase spans 521-785; sequence FDRGTMLWEG…GLLKDISPNY (265 aa). ATP-binding positions include 527 to 535 and lysine 549; that span reads LWEGKSGPT. Phosphotyrosine occurs at positions 594 and 683.

This sequence belongs to the protein kinase superfamily. Ser/Thr protein kinase family.

The protein resides in the cell membrane. The sequence is that of Probably inactive leucine-rich repeat receptor-like protein kinase At5g58150 from Arabidopsis thaliana (Mouse-ear cress).